Consider the following 951-residue polypeptide: UvrABC system protein A (951 aa).

33-40 contributes to the ATP binding site; that stretch reads GLSGSGKS. The C4-type zinc finger occupies 252 to 279; sequence CPICGFTVGELEPRLFSFNAPQGACPDC. ABC transporter domains lie at 309–587 and 607–935; these read WNPI…RKSL and GNGK…QYLK. 639-646 contributes to the ATP binding site; that stretch reads GVSGSGKS. Residues 738–764 form a C4-type zinc finger; sequence CEACHGDGILKIEMNFLPDVFVPCEVC.

This sequence belongs to the ABC transporter superfamily. UvrA family. In terms of assembly, forms a heterotetramer with UvrB during the search for lesions.

The protein resides in the cytoplasm. In terms of biological role, the UvrABC repair system catalyzes the recognition and processing of DNA lesions. UvrA is an ATPase and a DNA-binding protein. A damage recognition complex composed of 2 UvrA and 2 UvrB subunits scans DNA for abnormalities. When the presence of a lesion has been verified by UvrB, the UvrA molecules dissociate. The chain is UvrABC system protein A from Lactiplantibacillus plantarum (strain ATCC BAA-793 / NCIMB 8826 / WCFS1) (Lactobacillus plantarum).